A 310-amino-acid polypeptide reads, in one-letter code: MVILMYEIVRYEGGVYKNNIFKEWIEDIGGFVIQEHVMQLDVYMTLAIPQNELENIKEEAKKYKGKIIETPLAGTEIAVVAPSLSRHHLPHTACDISEYLRRFGAKPNMIGLARGVGRDIAQLREKERRLIEEHDLAVYVMGNFEDCIKNKTHLFDVDIPVVVTGGPEKIDIPYPYVGNLGRRSHRLRHGEEIRALRKMVEVITELINERRRELSYDPPIVPPVVVKDEIEKQVEEVYSILSPMPIVTQLDGLRVKLDYDKYADKIREVKVKNYTLGDIADIKRSEMKNYILIKIKPKSEVEFEMHKDKA.

This is an uncharacterized protein from Methanocaldococcus jannaschii (strain ATCC 43067 / DSM 2661 / JAL-1 / JCM 10045 / NBRC 100440) (Methanococcus jannaschii).